Consider the following 545-residue polypeptide: MKSLALALLVGGAIAAGPQQQVLQAPVDNPDVAEPPLQTIADTFDHLRGQATNLWNDVIDKVPNIMDTITHTPPPKKFNRRPDSEWNHIVRGAEIQAVWVEGDDGEKHRKVGGKLEAYDLRVKAVDPKALGVDTVRQYSGYLDDNENDKHLFYWFFESRNDPENDPVVLWLNGGPGCSSLTGLFLELGPSSITEDLKVNYNPYSWNANASVIFLDQPVNVGYSYSGGSVSDTNAAGKDVYALLTLFFEQFPEYAKQDFHIAGESYAGHYIPVFASEIMAHKERNINLKSILIGNGLTDPLTQYPLYRPMACGEGGYPAVLDQASCQSMDNALPRCLSMIEACYSSESAWTCVPASIYCNNAIIGPYQRTGRNPYDVRTDCEGGNLCYTQLGDISKYLNQAEVMKALGAEVSTYDSCNMDINRNFLFRGDWMKPFHRLVPGLIAEMPVLLYAGDADFICNWLGNKAWAEALEYPGHAKFAAAEMKNLTIVDNKSKGKVIGQVKSAGNFTFMRLYGGGHMVPLDQPEASLEFMNRWLKGEWSAKSSS.

The N-terminal stretch at 1–17 is a signal peptide; the sequence is MKSLALALLVGGAIAAG. Residues 18–123 constitute a propeptide that is removed on maturation; sequence PQQQVLQAPV…KLEAYDLRVK (106 aa). Disulfide bonds link Cys-177–Cys-416, Cys-311–Cys-325, Cys-335–Cys-358, Cys-342–Cys-351, and Cys-380–Cys-386. Asn-208 carries N-linked (GlcNAc...) asparagine glycosylation. Ser-264 is a catalytic residue. Asp-455 is an active-site residue. 3 N-linked (GlcNAc...) asparagine glycosylation sites follow: Asn-485, Asn-491, and Asn-506. Residue His-517 is part of the active site.

Belongs to the peptidase S10 family.

It is found in the vacuole. The enzyme catalyses Release of a C-terminal amino acid with broad specificity.. Functionally, vacuolar carboxypeptidase involved in degradation of small peptides. Digests preferentially peptides containing an aliphatic or hydrophobic residue in P1' position, as well as methionine, leucine or phenylalanine in P1 position of ester substrate. The polypeptide is Carboxypeptidase Y homolog A (CPYA) (Blastomyces gilchristii (strain SLH14081) (Blastomyces dermatitidis)).